Consider the following 225-residue polypeptide: Polyadenylate-binding protein 2 (225 aa).

Acidic residues predominate over residues 1–36; the sequence is MADEDISLNEDQLLESMEETNGEQETEIVTETEEEG. The interval 1–42 is disordered; the sequence is MADEDISLNEDQLLESMEETNGEQETEIVTETEEEGSMQIDP. Residues 14–74 adopt a coiled-coil conformation; sequence LESMEETNGE…QSEVDKQMAG (61 aa). One can recognise an RRM domain in the interval 96 to 173; the sequence is RSVYVGNVDY…RQIKVMSKRT (78 aa).

It is found in the nucleus. The protein localises to the cytoplasm. Functionally, involved in the 3'-end formation of mRNA precursors (pre-mRNA) by the addition of a poly(A) tail of 200-250 nt to the upstream cleavage product. Stimulates poly(A) polymerase (PAPOLA) conferring processivity on the poly(A) tail elongation reaction and also controls the poly(A) tail length. Increases the affinity of poly(A) polymerase for RNA. Binds to poly(A) and to poly(G) with high affinity. May protect the poly(A) tail from degradation. This is Polyadenylate-binding protein 2 from Drosophila pseudoobscura pseudoobscura (Fruit fly).